A 101-amino-acid polypeptide reads, in one-letter code: Small ribosomal subunit protein uS10 (101 aa).

Belongs to the universal ribosomal protein uS10 family. Part of the 30S ribosomal subunit.

Functionally, involved in the binding of tRNA to the ribosomes. The chain is Small ribosomal subunit protein uS10 from Mycobacterium bovis (strain ATCC BAA-935 / AF2122/97).